A 305-amino-acid chain; its full sequence is MLKNKSVVSIDDVQNDDLFEIFDLSESMLKTIESKGNAPLLTNKIMATLFYEPSTRTRLSFESAMHRLGGSVITVSDTKTSSAAKGETLADTVRMASSYSDIIVIRHPLEGAARLASRFTSKPIINAGDGSGQHPTQTILDLFTIKKELGSIDGKVITMVGDLRYGRTIHSLIIALSRFDVKVNLVSPEILRLPEYVYSMLPDRNYVKEYNDLEEVIGETDVLYVTRIQKERFSDQNEYQSVIGSYSINSETVEKMKKKSVIMHPLPRVDEISPDVDNMPQAAYFRQAYYGVPVRMALIYKILGD.

Arg56 and Thr57 together coordinate carbamoyl phosphate. Lys85 contacts L-aspartate. 3 residues coordinate carbamoyl phosphate: Arg106, His134, and Gln137. Residues Arg167 and Arg227 each coordinate L-aspartate. Carbamoyl phosphate-binding residues include Leu266 and Pro267.

It belongs to the aspartate/ornithine carbamoyltransferase superfamily. ATCase family. In terms of assembly, heterooligomer of catalytic and regulatory chains.

It catalyses the reaction carbamoyl phosphate + L-aspartate = N-carbamoyl-L-aspartate + phosphate + H(+). It functions in the pathway pyrimidine metabolism; UMP biosynthesis via de novo pathway; (S)-dihydroorotate from bicarbonate: step 2/3. Functionally, catalyzes the condensation of carbamoyl phosphate and aspartate to form carbamoyl aspartate and inorganic phosphate, the committed step in the de novo pyrimidine nucleotide biosynthesis pathway. The protein is Aspartate carbamoyltransferase catalytic subunit of Thermoplasma volcanium (strain ATCC 51530 / DSM 4299 / JCM 9571 / NBRC 15438 / GSS1).